A 160-amino-acid chain; its full sequence is Large ribosomal subunit protein uL11 (160 aa).

Belongs to the universal ribosomal protein uL11 family. In terms of assembly, part of the ribosomal stalk of the 50S ribosomal subunit. Interacts with L10 and the large rRNA to form the base of the stalk. L10 forms an elongated spine to which L12 dimers bind in a sequential fashion forming a multimeric L10(L12)X complex.

In terms of biological role, forms part of the ribosomal stalk which helps the ribosome interact with GTP-bound translation factors. This is Large ribosomal subunit protein uL11 from Methanothermobacter thermautotrophicus (strain ATCC 29096 / DSM 1053 / JCM 10044 / NBRC 100330 / Delta H) (Methanobacterium thermoautotrophicum).